Here is a 138-residue protein sequence, read N- to C-terminus: Basic phospholipase A2 homolog MjTX-I (138 aa).

Residues 1–16 (MRTLWIMAVLLVGVEG) form the signal peptide. A suramin-binding site is contributed by Val34. 7 cysteine pairs are disulfide-bonded: Cys42-Cys132, Cys44-Cys60, Cys59-Cys111, Cys65-Cys138, Cys66-Cys104, Cys73-Cys97, and Cys91-Cys102. Asn43 contributes to the varespladib binding site. Suramin is bound by residues Gly45 and Gly48. Varespladib-binding residues include His63 and Lys64. Position 85 (Lys85) interacts with suramin.

It belongs to the phospholipase A2 family. Group II subfamily. K49 sub-subfamily. As to quaternary structure, monomer in solution. Homodimer; non-covalently linked (probable conventional/extended dimer conformation). Homotetramer (dimer of homodimer (probable conventional/extended dimer conformation)); non-covalently linked. Homooligomer. In terms of tissue distribution, expressed by the venom gland.

It localises to the secreted. Myotoxin activity is inhibited by suramin and varespladib. Inhibition by suramin may be caused by (i) distortion of MDiS from both monomers impairing the membrane disruption mechanism by the toxin and (ii) surface electrostatic changes of the complex that interfere with the toxin membrane dockage process (putative-MDoS is partially hidden). Inhibition by varespladib is probably through varespladib binding to MDoS. Snake venom phospholipase A2 homolog that lacks enzymatic activity. In vivo, it displays local myotoxin and edema-inducing activities and is lethal by intraperitoneal injection. The myotoxicity effect is weaker in comparison to other myotoxins, probably due to the formation of high molecular weight complexes and to the oligomeric conformation (conventional dimer). It shows specificity toward neurons and myotubes, but not on a variety of other cell types. This PLA2 excites a cohort of sensory neurons via ATP release and consequent activation of P2RX2 and/or P2RX3 purinergic receptors. Pannexin hemichannels act as downstream mediators of toxin-evoked ATP release. In vivo, it elicits nonneurogenic inflammatory pain, thermal hyperalgesia, and mechanical allodynia, of which the latter is completely dependent on purinergic signaling. The polypeptide is Basic phospholipase A2 homolog MjTX-I (Bothrops moojeni (Lance-headed viper)).